We begin with the raw amino-acid sequence, 487 residues long: MKKQKGYLVFDIGTGNARVAVVSVTGSVLTVEREDIEYSTETLYPDSRYFSPQVLWKQVMNLAKRALSRSCDIDIIGLTSTSQRQGIVLIDQNGNPFLGLPNIDNRGREWEAGIPDWEEIYSSTGRLPTALFSALKLYGLKQRQPSLWEKTASFTSISDWVTYQLSGILTYEPSQATETLLFDVKQNTWSEEMCDIFGFSPSILPPLVRAGTAIGTIANEYASELGLSINAKVIAGGGDTQLAVKSTGAGLEDIVIVSGTTTPITKITEDHGDTKHKAWLNCHTDQGHWLVETNPGITGLNYQKLKQIFYPNETYEVMEEEISALAKEDHACVAALGSYLSAEKNALTRGGFLFDAPLSAHLKRAHFVRAALEEIAFSIKWNFDILTEVTPFERDYVWVCGGGFQSKALTQYIADLLQKKVYVQEGYHQASVVGAAVICNETFQLTEEMSANVRVIEPKDCQIELALYEEWKQTQRFFSGSESKVLI.

The protein belongs to the FGGY kinase family.

This is Putative sugar kinase YoaC (yoaC) from Bacillus subtilis (strain 168).